We begin with the raw amino-acid sequence, 508 residues long: Vacuolar serine-type carboxypeptidase ATG42 (508 aa).

An N-terminal signal peptide occupies residues Met1–Ala24. Disulfide bonds link Cys132-Cys375, Cys267-Cys281, Cys291-Cys314, Cys298-Cys307, and Cys336-Cys345. Residue Asn163 is glycosylated (N-linked (GlcNAc...) asparagine). Ser219 is a catalytic residue. N-linked (GlcNAc...) asparagine glycosylation is present at Asn242. 2 N-linked (GlcNAc...) asparagine glycosylation sites follow: Asn339 and Asn371. Asp415 is an active-site residue. Cys418 contacts substrate. His474 is an active-site residue. Met475 provides a ligand contact to substrate.

The protein belongs to the peptidase S10 family.

It is found in the vacuole lumen. It carries out the reaction Release of a C-terminal amino acid with broad specificity.. Vacuolar serine-type carboxypeptidase involved in vacuolar zymogen activation, breakdown of the autophagic body, and autophagosome-dependent protein synthesis. Plays a key role in phytochelatin (PC) synthesis from glutathione (GSH) by cleaving the Gly from GSH and form the PC-peptides of the structure (gamma-Glu-Cys)2-Gly. Also involved in resistance to xenobiotics via the degradation of glutathione-S-conjugates. The polypeptide is Vacuolar serine-type carboxypeptidase ATG42 (Saccharomyces cerevisiae (strain ATCC 204508 / S288c) (Baker's yeast)).